Here is a 371-residue protein sequence, read N- to C-terminus: Maltose/maltodextrin import ATP-binding protein MalK (371 aa).

The region spanning 4 to 234 (VQLQNVTKAW…PADRFVAGFI (231 aa)) is the ABC transporter domain. 36 to 43 (GPSGCGKS) lines the ATP pocket.

This sequence belongs to the ABC transporter superfamily. Maltooligosaccharide importer (TC 3.A.1.1.1) family. As to quaternary structure, the complex is composed of two ATP-binding proteins (MalK), two transmembrane proteins (MalG and MalK) and a solute-binding protein (MalE).

It is found in the cell inner membrane. The enzyme catalyses D-maltose(out) + ATP + H2O = D-maltose(in) + ADP + phosphate + H(+). Functionally, part of the ABC transporter complex MalEFGK involved in maltose/maltodextrin import. Responsible for energy coupling to the transport system. The sequence is that of Maltose/maltodextrin import ATP-binding protein MalK from Escherichia coli O157:H7.